Consider the following 1509-residue polypeptide: ABC transporter G family member 5 (1509 aa).

A compositionally biased stretch (basic and acidic residues) spans 1-10 (MVKQDPRDKS). The segment at 1 to 70 (MVKQDPRDKS…NNNNNNIKHK (70 aa)) is disordered. Residues 11–28 (SYSPNLSIPINNQEEPTL) are compositionally biased toward polar residues. A compositionally biased stretch (low complexity) spans 29 to 66 (NNNNNNNNNNNNNNNNNNNNNNNNNNNNNNNKNNNNNN). The ABC transporter 1 domain occupies 129-376 (VYCRNATYTV…FKKLGFACPS (248 aa)). ATP is bound at residue 168-175 (GTPGCGKS). Positions 472 to 748 (SRNYYNFATR…SVCFFALKYL (277 aa)) constitute an ABC transmembrane type-2 1 domain. Helical transmembrane passes span 477 to 497 (NFAT…TLYW), 512 to 532 (LLFF…NSFF), 557 to 577 (IICD…IVYW), 583 to 603 (PVFI…NLSL), 616 to 636 (IEIA…FSGF), 643 to 663 (IGGW…FQGL), and 725 to 745 (IVYA…FFAL). Low complexity predominate over residues 813 to 831 (PLTSPNYNNNNNLSGSGNN). Residues 813 to 881 (PLTSPNYNNN…PISTSQKDIS (69 aa)) form a disordered region. Over residues 839–881 (TPSTLSPMVNSPLTNLSPMVNTPSKNGNHSKQKPISTSQKDIS) the composition is skewed to polar residues. The ABC transporter 2 domain maps to 888–1141 (LQFKKLCYAV…VILDYCDKLG (254 aa)). 935-942 (GPSGAGKS) is a binding site for ATP. The ABC transmembrane type-2 2 domain maps to 1231–1504 (LRRPAIFVSN…GLSFWGFKKV (274 aa)). 6 helical membrane passes run 1236–1256 (IFVS…TLFV), 1271–1291 (LLFF…PTTV), 1320–1340 (YPFI…IAGL), 1352–1372 (CLFI…CLAV), 1379–1399 (MAST…GFVI), and 1481–1501 (IDIA…FWGF).

The protein belongs to the ABC transporter superfamily. ABCG family. PDR (TC 3.A.1.205) subfamily.

The protein resides in the membrane. The sequence is that of ABC transporter G family member 5 (abcG5) from Dictyostelium discoideum (Social amoeba).